A 371-amino-acid polypeptide reads, in one-letter code: Cytochrome b (371 aa).

The next 4 helical transmembrane spans lie at 25–45, 69–90, 105–125, and 170–190; these read FGSM…FLAV, WMMQ…YIHI, WLSG…GYVL, and FSAL…LHIM. Residues histidine 75 and histidine 89 each coordinate heme b. The heme b site is built by histidine 174 and histidine 188. A ubiquinone is bound at residue histidine 193. Transmembrane regions (helical) follow at residues 218–238, 280–300, 312–332, and 339–358; these read YKDL…VSFL, LGGA…PFTH, IMQL…WSAT, and FTVI…IMNP.

This sequence belongs to the cytochrome b family. As to quaternary structure, the cytochrome bc1 complex contains 3 respiratory subunits (MT-CYB, CYC1 and UQCRFS1), 2 core proteins (UQCRC1 and UQCRC2) and probably 6 low-molecular weight proteins. Requires heme b as cofactor.

Its subcellular location is the mitochondrion inner membrane. Its function is as follows. Component of the ubiquinol-cytochrome c reductase complex (complex III or cytochrome b-c1 complex) that is part of the mitochondrial respiratory chain. The b-c1 complex mediates electron transfer from ubiquinol to cytochrome c. Contributes to the generation of a proton gradient across the mitochondrial membrane that is then used for ATP synthesis. This is Cytochrome b (MT-CYB) from Eryx elegans (Central Asian sand boa).